The primary structure comprises 940 residues: Serine/threonine-protein phosphatase 1 regulatory subunit 10 (940 aa).

An interaction with TOX4 region spans residues 1–348 (MGSGPIDPKE…EPAPPSEAME (348 aa)). The TFIIS N-terminal domain maps to 73 to 147 (KLLNNWLTYS…SDWMAVIRSQ (75 aa)). Disordered regions lie at residues 147-210 (QSST…KFRS), 248-270 (NVAAPGDATPPAEKKYKPLNTTP), 304-400 (KIKK…KSVT), and 534-557 (VETLEPGGSGGSPDGAGGSKLPPV). Basic and acidic residues-rich tracts occupy residues 153-166 (AEKDKKKRKDEGKS) and 174-196 (PLTEVKAETRAEEAPEKKREKPK). Residue K179 forms a Glycyl lysine isopeptide (Lys-Gly) (interchain with G-Cter in SUMO2) linkage. Residue T256 is modified to Phosphothreonine. K262 is covalently cross-linked (Glycyl lysine isopeptide (Lys-Gly) (interchain with G-Cter in SUMO2)). Residue S313 is modified to Phosphoserine. The segment covering 325–336 (KTSTEPSTAKPS) has biased composition (low complexity). The tract at residues 357–433 (PPVEVPELMD…NKIKDFGEAA (77 aa)) is necessary for interaction with PPP1CA. S382 carries the post-translational modification Phosphoserine. Residues 393–408 (GRKRKSVTWPEEGKLR) form a necessary for interaction with PPP1CC region. The PP1-binding motif signature appears at 394-423 (RKRKSVTWPEEGKLREYFYFELDETERVNV). Residue S398 is modified to Phosphoserine; by PKA. The interaction with WDR82 stretch occupies residues 418–619 (TERVNVNKIK…IKQMLVPHGL (202 aa)). Positions 540-551 (GGSGGSPDGAGG) are enriched in gly residues. 2 positions are modified to phosphoserine: S545 and S591. The tract at residues 617 to 905 (HGLLGPGPIA…HDGGHSHGGD (289 aa)) is disordered. Over residues 644–655 (PPGPGGPMPGPH) the composition is skewed to pro residues. Position 665 is an omega-N-methylarginine (R665). The span at 676–690 (GDPFWDGPGDPMRGG) shows a compositional bias: low complexity. R693 and R738 each carry omega-N-methylarginine. Composition is skewed to gly residues over residues 725 to 763 (ARGGRSGGGPPNGRGGPGGGMVGGGGHRPHEGPGGGMGN) and 789 to 844 (GSMG…GSGG). Composition is skewed to basic and acidic residues over residues 861-886 (PHDVPGHRGHDHRGPPPHEHRGHDGP) and 894-903 (RGHDGGHSHG). The segment at 906-934 (MSNRPVCRHFMMKGNCRYENNCAFYHPGV) adopts a C3H1-type zinc-finger fold.

Component of the PNUTS-PP1 complex (also named PTW/PP1 complex), composed of PPP1R10/PNUTS, TOX4, WDR82, and PPP1CA (or PPP1CB or PPP1CC). Phosphorylated on Ser-398 by PKA within the region necessary for interaction with PPP1CA.

The protein resides in the nucleus. Its subcellular location is the chromosome. In terms of biological role, substrate-recognition component of the PNUTS-PP1 protein phosphatase complex, a protein phosphatase 1 (PP1) complex that promotes RNA polymerase II transcription pause-release, allowing transcription elongation. Promoter-proximal pausing by RNA polymerase II is a transcription halt following transcription initiation but prior to elongation, which acts as a checkpoint to control that transcripts are favorably configured for transcriptional elongation. The PNUTS-PP1 complex mediates the release of RNA polymerase II from promoter-proximal region of genes by catalyzing dephosphorylation of proteins involved in transcription, such as AFF4, CDK9, MEPCE, INTS12, NCBP1, POLR2M/GDOWN1 and SUPT6H. The PNUTS-PP1 complex also regulates RNA polymerase II transcription termination by mediating dephosphorylation of SUPT5H in termination zones downstream of poly(A) sites, thereby promoting deceleration of RNA polymerase II transcription. PNUTS-PP1 complex is also involved in the response to replication stress by mediating dephosphorylation of POLR2A at 'Ser-5' of the CTD, promoting RNA polymerase II degradation. The PNUTS-PP1 complex also plays a role in the control of chromatin structure and cell cycle progression during the transition from mitosis into interphase. PNUTS-PP1 complex mediates dephosphorylation of MYC, promoting MYC stability by preventing MYC ubiquitination by the SCF(FBXW7) complex. In addition to acts as a substrate-recognition component, PPP1R10/PNUTS also acts as a nuclear targeting subunit for the PNUTS-PP1 complex. In some context, PPP1R10/PNUTS also acts as an inhibitor of protein phosphatase 1 (PP1) activity by preventing access to substrates, such as RB. The chain is Serine/threonine-protein phosphatase 1 regulatory subunit 10 (PPP1R10) from Pan troglodytes (Chimpanzee).